The primary structure comprises 2969 residues: Histone-lysine N-methyltransferase ASH1L (2969 aa).

Disordered regions lie at residues 1–70 (MDPR…TDAQ) and 118–143 (HPRKALKSGKMTDEKNEHCPSKRDPS). A compositionally biased stretch (polar residues) spans 21-31 (KSPSAISTGTL). Ser22 carries the post-translational modification Phosphoserine. Composition is skewed to basic and acidic residues over residues 33–65 (SKREVELEKNTKEEEDLRKRNRERNIEAGKDDG) and 127–143 (KMTDEKNEHCPSKRDPS). Residue Lys34 forms a Glycyl lysine isopeptide (Lys-Gly) (interchain with G-Cter in SUMO2) linkage. At Lys375 the chain carries N6-acetyllysine. Lys425 participates in a covalent cross-link: Glycyl lysine isopeptide (Lys-Gly) (interchain with G-Cter in SUMO2). The segment covering 501–511 (IQQDSFSSSEK) has biased composition (polar residues). Disordered stretches follow at residues 501 to 525 (IQQDSFSSSEKGSYETSKHEKQPPV), 537 to 583 (ASDV…PNPL), 824 to 845 (YKPKRGRPKSKEMPQLEGPPKR), 878 to 966 (KQGL…EMEP), 1100 to 1128 (SEILPSPICSQSSGTSGGQSPVSSDAGFV), 1151 to 1231 (MKKA…EHVS), and 1243 to 1281 (SLKEKHKHKCKRRNHDYLSYDKMKRQKRKRKKKYPQLRN). Positions 512–522 (GSYETSKHEKQ) are enriched in basic and acidic residues. Positions 554–579 (NLPSPSPTVSVNPLTRSPPETSSQLA) are enriched in polar residues. The segment covering 887–897 (PKKRGRPKRQM) has biased composition (basic residues). The segment at residues 887–899 (PKKRGRPKRQMRS) is a DNA-binding region (a.T hook 1). Over residues 920-932 (SKLESESDNHRSS) the composition is skewed to basic and acidic residues. A compositionally biased stretch (acidic residues) spans 936 to 949 (FESEDQLQDPDDLD). Composition is skewed to low complexity over residues 1100 to 1123 (SEILPSPICSQSSGTSGGQSPVSS) and 1162 to 1175 (SPPTLLPNSPSHLS). Phosphoserine occurs at positions 1162 and 1170. Residues 1186-1211 (SPISESHSDETIPSDSGIGTDNNSTS) are compositionally biased toward polar residues. Residue Gln1220 is modified to N5-methylglutamine. Basic residues-rich tracts occupy residues 1246–1256 (EKHKHKCKRRN) and 1266–1277 (KRQKRKRKKKYP). A DNA-binding region (a.T hook 2) is located at residues 1347–1359 (KKKRGRPPKMREA). Disordered stretches follow at residues 1489–1508 (HREHRSSEQPQVSMDTGSSR), 1580–1711 (SESS…ASGD), and 1741–1761 (ASAPPSSSPGRSHSKDRTLGK). 4 stretches are compositionally biased toward polar residues: residues 1496–1508 (EQPQVSMDTGSSR), 1580–1598 (SESSPSLSLGGFTPNSEPA), 1605–1622 (NLFTSAIGSCRVSNPNSS), and 1650–1680 (LPSNERAVQTLAGSQPTSDKPSQRPSESTNC). Residues 1741–1751 (ASAPPSSSPGR) are compositionally biased toward low complexity. The segment at residues 1847-1859 (KRRPGRPRKCPLQ) is a DNA-binding region (a.T hook 3). A disordered region spans residues 1911-1991 (KKGLKRKGWL…PRPPKKKYQK (81 aa)). The tract at residues 2069-2288 (PDVPLYKKIR…KCRGIIGGKS (220 aa)) is catalytic domain. The AWS domain maps to 2091-2142 (YEATTCNCKKPDDDTRKGCVDDCLNRMIFAECSPNTCPCGEQCCNQRIQRHE). Positions 2145–2261 (QCLERFRAEE…AGTELTYDYN (117 aa)) constitute an SET domain. A Post-SET domain is found at 2269 to 2285 (KQQLCKCGFEKCRGIIG). A disordered region spans residues 2288-2346 (SQRVNGLTSSKNSQPMATHKKSGRSKEKRKSKHKLKKRRGHLSEEPSENINTPTRLTPQ). Over residues 2289–2303 (QRVNGLTSSKNSQPM) the composition is skewed to polar residues. Basic residues predominate over residues 2305–2327 (THKKSGRSKEKRKSKHKLKKRRG). 3 positions are modified to N6-acetyllysine: Lys2317, Lys2319, and Lys2323. The span at 2335–2346 (ENINTPTRLTPQ) shows a compositional bias: polar residues. A Bromo domain is found at 2444-2550 (RLAQIFKEIC…KAYYNARHEA (107 aa)). Residues 2585 to 2631 (VIRCICGLYKDEGLMIQCDKCMVWQHCDCMGVNSDVEHYLCEQCDPR) form a PHD-type zinc finger. The BAH domain occupies 2661–2798 (LLLRQGDCVY…KSAHLFYKIH (138 aa)). Disordered stretches follow at residues 2825–2856 (SPHYVPDNYKRNGGRSSWKSERSKPPLKDLGQ) and 2876–2919 (NEIP…RRHN). Basic and acidic residues predominate over residues 2842–2855 (WKSERSKPPLKDLG).

This sequence belongs to the class V-like SAM-binding methyltransferase superfamily. Histone-lysine methyltransferase family. SET2 subfamily. Post-translationally, methylated at Gln-1220 by N6AMT1. Widely expressed, with highest level in brain, heart and kidney.

The protein resides in the nucleus. Its subcellular location is the cell junction. It is found in the tight junction. The protein localises to the chromosome. It catalyses the reaction L-lysyl(36)-[histone H3] + 3 S-adenosyl-L-methionine = N(6),N(6),N(6)-trimethyl-L-lysyl(36)-[histone H3] + 3 S-adenosyl-L-homocysteine + 3 H(+). The enzyme catalyses L-lysyl(9)-[histone H3] + S-adenosyl-L-methionine = N(6)-methyl-L-lysyl(9)-[histone H3] + S-adenosyl-L-homocysteine + H(+). Functionally, histone methyltransferase specifically trimethylating 'Lys-36' of histone H3 forming H3K36me3. Also monomethylates 'Lys-9' of histone H3 (H3K9me1) in vitro. The physiological significance of the H3K9me1 activity is unclear. This Homo sapiens (Human) protein is Histone-lysine N-methyltransferase ASH1L (ASH1L).